The primary structure comprises 470 residues: Cysteine--tRNA ligase (470 aa).

C30 is a binding site for Zn(2+). The 'HIGH' region motif lies at 32-42; it reads PTVYNYIHIGN. Residues C211, H236, and E240 each contribute to the Zn(2+) site. The 'KMSKS' region signature appears at 268–272; that stretch reads KMSKS. Residue K271 coordinates ATP.

It belongs to the class-I aminoacyl-tRNA synthetase family. As to quaternary structure, monomer. Zn(2+) serves as cofactor.

It is found in the cytoplasm. It catalyses the reaction tRNA(Cys) + L-cysteine + ATP = L-cysteinyl-tRNA(Cys) + AMP + diphosphate. This is Cysteine--tRNA ligase from Fervidobacterium nodosum (strain ATCC 35602 / DSM 5306 / Rt17-B1).